We begin with the raw amino-acid sequence, 160 residues long: Cytochrome b6-f complex subunit 4 (160 aa).

3 helical membrane passes run 36–56 (LLYV…GLAV), 95–115 (LLGI…PFIE), and 131–151 (AVFL…TFPI).

It belongs to the cytochrome b family. PetD subfamily. The 4 large subunits of the cytochrome b6-f complex are cytochrome b6, subunit IV (17 kDa polypeptide, PetD), cytochrome f and the Rieske protein, while the 4 small subunits are PetG, PetL, PetM and PetN. The complex functions as a dimer.

It localises to the cellular thylakoid membrane. Functionally, component of the cytochrome b6-f complex, which mediates electron transfer between photosystem II (PSII) and photosystem I (PSI), cyclic electron flow around PSI, and state transitions. The sequence is that of Cytochrome b6-f complex subunit 4 from Crocosphaera subtropica (strain ATCC 51142 / BH68) (Cyanothece sp. (strain ATCC 51142)).